The chain runs to 404 residues: Cysteine desulfurase IscS (404 aa).

Pyridoxal 5'-phosphate-binding positions include 75–76, Asn155, Gln183, and 203–205; these read AT and SGH. Lys206 is subject to N6-(pyridoxal phosphate)lysine. Thr243 is a pyridoxal 5'-phosphate binding site. The active-site Cysteine persulfide intermediate is Cys328. Cys328 is a [2Fe-2S] cluster binding site.

The protein belongs to the class-V pyridoxal-phosphate-dependent aminotransferase family. NifS/IscS subfamily. In terms of assembly, homodimer. Forms a heterotetramer with IscU, interacts with other sulfur acceptors. The cofactor is pyridoxal 5'-phosphate.

It is found in the cytoplasm. It carries out the reaction (sulfur carrier)-H + L-cysteine = (sulfur carrier)-SH + L-alanine. The protein operates within cofactor biosynthesis; iron-sulfur cluster biosynthesis. In terms of biological role, master enzyme that delivers sulfur to a number of partners involved in Fe-S cluster assembly, tRNA modification or cofactor biosynthesis. Catalyzes the removal of elemental sulfur and selenium atoms from cysteine and selenocysteine to produce alanine. Functions as a sulfur delivery protein for Fe-S cluster synthesis onto IscU, an Fe-S scaffold assembly protein, as well as other S acceptor proteins. Also functions as a selenium delivery protein in the pathway for the biosynthesis of selenophosphate. The polypeptide is Cysteine desulfurase IscS (Salmonella schwarzengrund (strain CVM19633)).